We begin with the raw amino-acid sequence, 215 residues long: Ubiquitin-conjugating enzyme E2 S (215 aa).

Residues 9–155 (DVIKRVVKEL…AKLFTSIHAS (147 aa)) form the UBC core domain. Cys-93 functions as the Glycyl thioester intermediate in the catalytic mechanism. Residues 159-215 (IDSNNNNENSTTTPTTTTTATTPSTNTASISSPVKKKTETTNSTTTKVQPKKSLKRL) form a disordered region. A compositionally biased stretch (low complexity) spans 161-190 (SNNNNENSTTTPTTTTTATTPSTNTASISS).

This sequence belongs to the ubiquitin-conjugating enzyme family.

The enzyme catalyses S-ubiquitinyl-[E1 ubiquitin-activating enzyme]-L-cysteine + [E2 ubiquitin-conjugating enzyme]-L-cysteine = [E1 ubiquitin-activating enzyme]-L-cysteine + S-ubiquitinyl-[E2 ubiquitin-conjugating enzyme]-L-cysteine.. Its pathway is protein modification; protein ubiquitination. In terms of biological role, catalyzes the covalent attachment of ubiquitin to other proteins. Acts as an essential factor of the anaphase promoting complex/cyclosome (APC/C), a cell cycle-regulated ubiquitin ligase that controls progression through mitosis. Acts by specifically elongating polyubiquitin chains initiated by the E2 enzyme ubch10 on APC/C substrates, enhancing the degradation of APC/C substrates by the proteasome and promoting mitotic exit. This Dictyostelium discoideum (Social amoeba) protein is Ubiquitin-conjugating enzyme E2 S (ube2s).